Here is a 723-residue protein sequence, read N- to C-terminus: Catalase-peroxidase (723 aa).

Positions 96–224 (WHAAGTYRIQ…LAAVQMGLIY (129 aa)) form a cross-link, tryptophyl-tyrosyl-methioninium (Trp-Tyr) (with M-250). His-97 serves as the catalytic Proton acceptor. Residues 224–250 (YVNPEGVNSQPDPIKTGEQVRVTFARM) constitute a cross-link (tryptophyl-tyrosyl-methioninium (Tyr-Met) (with W-96)). His-265 contacts heme b.

Belongs to the peroxidase family. Peroxidase/catalase subfamily. Homodimer or homotetramer. It depends on heme b as a cofactor. Formation of the three residue Trp-Tyr-Met cross-link is important for the catalase, but not the peroxidase activity of the enzyme.

It carries out the reaction H2O2 + AH2 = A + 2 H2O. It catalyses the reaction 2 H2O2 = O2 + 2 H2O. Bifunctional enzyme with both catalase and broad-spectrum peroxidase activity. The chain is Catalase-peroxidase from Marinobacter nauticus (strain ATCC 700491 / DSM 11845 / VT8) (Marinobacter aquaeolei).